Consider the following 552-residue polypeptide: HTH-type transcriptional regulator SgrR (552 aa).

Residues 1–116 (MPSARLQQQF…LVSHLGRSFR (116 aa)) form the HTH marR-type domain. Positions 26–49 (LNELAALLSCSRRHMRTLLNTMQD) form a DNA-binding region, H-T-H motif. The segment at 163-492 (ELEADIAHHW…IDWQVDAARW (330 aa)) is solute-binding.

In terms of biological role, activates the small RNA gene sgrS under glucose-phosphate stress conditions as well as yfdZ. Represses its own transcription under both stress and non-stress conditions. Might act as a sensor of the intracellular accumulation of phosphoglucose by binding these molecules in its C-terminal solute-binding domain. In Escherichia coli O157:H7, this protein is HTH-type transcriptional regulator SgrR.